Here is a 470-residue protein sequence, read N- to C-terminus: Acetyl-CoA decarbonylase/synthase complex subunit gamma (470 aa).

The 62-residue stretch at 1–62 (MKVKSPLEVY…DPKVKKKLEE (62 aa)) folds into the 4Fe-4S domain. Residues cysteine 18, cysteine 21, cysteine 26, and cysteine 43 each contribute to the [4Fe-4S] cluster site.

In terms of assembly, heterodimer of delta and gamma chains. The ACDS complex is made up of alpha, epsilon, beta, gamma and delta chains with a probable stoichiometry of (alpha(2)epsilon(2))(4)-beta(8)-(gamma(1)delta(1))(8). Requires corrinoid as cofactor. The cofactor is [4Fe-4S] cluster.

The enzyme catalyses 5,6,7,8-tetrahydrosarcinapterin + methyl-Co(III)-[corrinoid Fe-S protein] = 5-methyltetrahydrosarcinapterin + Co(I)-[corrinoid Fe-S protein] + H(+). Functionally, part of a complex that catalyzes the reversible cleavage of acetyl-CoA, allowing autotrophic growth from CO(2). The polypeptide is Acetyl-CoA decarbonylase/synthase complex subunit gamma (Archaeoglobus fulgidus (strain ATCC 49558 / DSM 4304 / JCM 9628 / NBRC 100126 / VC-16)).